The sequence spans 289 residues: Ribosomal protein L11 methyltransferase (289 aa).

S-adenosyl-L-methionine-binding residues include T142, G163, D185, and N226.

Belongs to the methyltransferase superfamily. PrmA family.

Its subcellular location is the cytoplasm. The catalysed reaction is L-lysyl-[protein] + 3 S-adenosyl-L-methionine = N(6),N(6),N(6)-trimethyl-L-lysyl-[protein] + 3 S-adenosyl-L-homocysteine + 3 H(+). Methylates ribosomal protein L11. The protein is Ribosomal protein L11 methyltransferase of Legionella pneumophila (strain Lens).